The following is a 278-amino-acid chain: Glycyl-dTMP PLP-dependent decarboxylase (278 aa).

The protein belongs to the pyridoxal-phosphate-dependent aminodecarboxylase family.

It catalyses the reaction 5-C(alpha)-glycyl-dTMP in DNA + H(+) = 5-aminoethyl-dUMP in DNA + CO2. Its function is as follows. Converts 5-Calpha-glycinylthymidine (Calpha-GlyT) into 5-aminoethyl-2'-deoxyuridine (5-NedU) as a step in the pathway leading to thymidine hypermodifications in the viral genome. As a final result of the pathway of hypermodification, 5-aminoethyl-2'-deoxyuridine (5-NedU) substitutes for about 30% of thymidines in the viral DNA. These modifications probably prevent degradation of viral genome by the host restriction-modification antiviral defense system. This Pseudomonas aeruginosa protein is Glycyl-dTMP PLP-dependent decarboxylase.